Reading from the N-terminus, the 1207-residue chain is Glycerotoxin paralog 1 (1207 aa).

Residues 79 to 120 (DLNECNRNNGGCTNGKCINTEGSYHCDCDRGYLATSSRTKCE) form the EGF-like domain. 5 disulfide bridges follow: cysteine 83–cysteine 95, cysteine 90–cysteine 104, cysteine 106–cysteine 119, cysteine 124–cysteine 167, and cysteine 151–cysteine 185. Positions 122–187 (VECEPLTLAN…WSGTSPTCQN (66 aa)) constitute a Sushi domain. WSC domains are found at residues 300 to 391 (VGTS…YRDR) and 392 to 476 (SLGF…NDQG). An N-linked (GlcNAc...) asparagine glycan is attached at asparagine 745.

Dimer; probably disulfide-linked. Interacts with Cav2.2/CACNA1B calcium channel. As to expression, expressed exclusively in the four pharyngeal lobes and in tissue located at the base of the teeth. No distinct expression is visible in the putative venom glands or elsewhere in the pharynx.

It localises to the secreted. Its function is as follows. Potent venom presynaptic neurotoxin that promotes a long-lasting increase in spontaneous neurotransmitter release at the peripheral and central synapses by selective activation of Cav2.2/CACNA1B (N-type) channels. In addition, it drastically enhances synaptic-vesicle recycling, an effect that is prevented by the Cav2.2-specific inhibitor conotoxin-MVIIA. It activates Cav2.2/CACNA1B by shifting the current-voltage relationship of channels towards more hyperpolarized potentiels in a reversible manner. May have two separate sites of action on Cav2.2: one high affinity linked to changes in gating properties, and a second low affinity that results in block of current activity. The polypeptide is Glycerotoxin paralog 1 (Glycera tridactyla (Glycerine worm)).